The chain runs to 366 residues: Ferredoxin--NADP reductase, leaf isozyme 2, chloroplastic (366 aa).

The N-terminal 48 residues, Met1–Arg48, are a transit peptide targeting the chloroplast. Positions Lys87–Met209 constitute an FAD-binding FR-type domain. Residues Arg145 to Ser148, Cys166 to Lys168, Tyr172, and Val183 to Ser185 each bind FAD. NADP(+) is bound by residues Ser148 and Lys168. Cys184 and Cys189 form a disulfide bridge. The residue at position 185 (Ser185) is a Phosphoserine. Thr216 carries the phosphothreonine modification. Thr224 serves as a coordination point for FAD. Residues Thr224, Val256–Pro257, Ser286–Arg287, Lys296, Gly325–Leu326, and Glu364 contribute to the NADP(+) site.

Belongs to the ferredoxin--NADP reductase type 1 family. Heterodimer with LFNR1. Component of high molecular weight thylakoid LFNRs-containing protein complexes containing LIR1, LFNR1, LFNR2, TIC62 and TROL proteins. Interacts directly with LIR1 and TIC62; LIR1 increases the affinity of LFNR1 and LFNR2 for TIC62. The cofactor is FAD. In terms of processing, may form interchain disulfide bonds with LIR1.

Its subcellular location is the plastid. It localises to the chloroplast stroma. The protein resides in the chloroplast thylakoid membrane. The enzyme catalyses 2 reduced [2Fe-2S]-[ferredoxin] + NADP(+) + H(+) = 2 oxidized [2Fe-2S]-[ferredoxin] + NADPH. The protein operates within energy metabolism; photosynthesis. Its function is as follows. Plays a key role in regulating the relative amounts of cyclic and non-cyclic electron flow to meet the demands of the plant for ATP and reducing power. The sequence is that of Ferredoxin--NADP reductase, leaf isozyme 2, chloroplastic from Oryza sativa subsp. japonica (Rice).